Reading from the N-terminus, the 62-residue chain is MAKCDICGKGVGFGKKYSHSHIRTNRQWKPNIQPVKAIVDGTPKKIYVCTRCLRSGKVERAI.

The protein belongs to the bacterial ribosomal protein bL28 family.

The sequence is that of Large ribosomal subunit protein bL28 from Syntrophomonas wolfei subsp. wolfei (strain DSM 2245B / Goettingen).